The following is a 207-amino-acid chain: Dephospho-CoA kinase (207 aa).

In terms of domain architecture, DPCK spans 5–203; that stretch reads AVGLTGGIAC…ARYRALASVF (199 aa). 13 to 18 contacts ATP; sequence ACGKSL.

Belongs to the CoaE family.

The protein localises to the cytoplasm. The catalysed reaction is 3'-dephospho-CoA + ATP = ADP + CoA + H(+). Its pathway is cofactor biosynthesis; coenzyme A biosynthesis; CoA from (R)-pantothenate: step 5/5. In terms of biological role, catalyzes the phosphorylation of the 3'-hydroxyl group of dephosphocoenzyme A to form coenzyme A. This is Dephospho-CoA kinase from Xylella fastidiosa (strain 9a5c).